A 498-amino-acid polypeptide reads, in one-letter code: Glycerol kinase (498 aa).

Thr-12 lines the ADP pocket. The ATP site is built by Thr-12, Thr-13, and Ser-14. Thr-12 is a sn-glycerol 3-phosphate binding site. An ADP-binding site is contributed by Arg-16. Positions 82, 83, 134, and 244 each coordinate sn-glycerol 3-phosphate. Glycerol contacts are provided by Arg-82, Glu-83, Tyr-134, Asp-244, and Gln-245. 2 residues coordinate ADP: Thr-266 and Gly-310. ATP-binding residues include Thr-266, Gly-310, Gln-314, and Gly-411. ADP is bound by residues Gly-411 and Asn-415.

This sequence belongs to the FGGY kinase family.

The enzyme catalyses glycerol + ATP = sn-glycerol 3-phosphate + ADP + H(+). Its pathway is polyol metabolism; glycerol degradation via glycerol kinase pathway; sn-glycerol 3-phosphate from glycerol: step 1/1. Inhibited by fructose 1,6-bisphosphate (FBP). Functionally, key enzyme in the regulation of glycerol uptake and metabolism. Catalyzes the phosphorylation of glycerol to yield sn-glycerol 3-phosphate. This Chloroflexus aurantiacus (strain ATCC 29366 / DSM 635 / J-10-fl) protein is Glycerol kinase.